The following is a 139-amino-acid chain: Large ribosomal subunit protein uL16 (139 aa).

Belongs to the universal ribosomal protein uL16 family. As to quaternary structure, part of the 50S ribosomal subunit.

In terms of biological role, binds 23S rRNA and is also seen to make contacts with the A and possibly P site tRNAs. The polypeptide is Large ribosomal subunit protein uL16 (Protochlamydia amoebophila (strain UWE25)).